We begin with the raw amino-acid sequence, 162 residues long: Caveolin-2 (162 aa).

Over 1–86 (MGLESEKADV…FEISKYVLYK (86 aa)) the chain is Cytoplasmic. Position 19 is a phosphotyrosine (Tyr-19). Residues Ser-20, Ser-23, and Ser-36 each carry the phosphoserine modification. An intramembrane region (helical) is located at residues 87 to 107 (FLTFFLAIPLAFAAGILFAIL). Over 108-162 (SCLHIWIIMPFVKTCLMVLPSVQTIWKSVTDVVIAPLCTSVGRSFSSVSLQLSQD) the chain is Cytoplasmic.

Belongs to the caveolin family. As to quaternary structure, monomer or homodimer. Interacts with CAV1; the interaction forms a stable heterooligomeric complex that is required for targeting to lipid rafts and for caveolae formation. Tyrosine phosphorylated forms do not form heterooligomers with the Tyr-19-phosphorylated form existing as a monomer or dimer. Interacts (tyrosine phosphorylated form) with the SH2 domain-containing proteins, RASA1, NCK1 and SRC. Interacts (tyrosine phosphorylated form) with INSR. Interacts (Tyr-19 phosphorylated form) with MAPK1 (phosphorylated form); the interaction, promoted by insulin, leads to nuclear location and MAPK1 activation. Interacts with STAT3; the interaction is increased on insulin-induced tyrosine phosphorylation leading to STAT activation. Post-translationally, phosphorylated on serine and tyrosine residues. CAV1 promotes phosphorylation on Ser-23 which then targets the complex to the plasma membrane, lipid rafts and caveolae. Phosphorylation on Ser-36 appears to modulate mitosis in endothelial cells. Phosphorylation on Tyr-19 is required for insulin-induced phosphorylation of MAPK1 and DNA binding of STAT3. Tyrosine phosphorylation is induced by both EGF and insulin.

Its subcellular location is the nucleus. The protein resides in the golgi apparatus membrane. It localises to the cell membrane. The protein localises to the membrane. It is found in the caveola. Its function is as follows. May act as a scaffolding protein within caveolar membranes. Interacts directly with G-protein alpha subunits and can functionally regulate their activity. Acts as an accessory protein in conjunction with CAV1 in targeting to lipid rafts and driving caveolae formation. The Ser-36 phosphorylated form has a role in modulating mitosis in endothelial cells. Positive regulator of cellular mitogenesis of the MAPK signaling pathway. Required for the insulin-stimulated nuclear translocation and activation of MAPK1 and STAT3, and the subsequent regulation of cell cycle progression. The protein is Caveolin-2 (CAV2) of Echinops telfairi (Lesser hedgehog tenrec).